A 199-amino-acid chain; its full sequence is MVKIGVCGPVGSGKTALIEALTRHMSKDYDMAVITNDIYTKEDAEFMCKNSVMPRERIIGVETGGCPHTAIREDASMNLEAVEEMHDRFPNLELLLIESGGDNLSATFNPELADFTIFVIDVAEGDKIPRKGGPGITRSDLLVINKIDLAPYVGADLKVMERDSKKMRGEKPFIFTNIRAKEGLDDVIAWIKRNALLED.

8–15 (GPVGSGKT) serves as a coordination point for GTP.

Belongs to the SIMIBI class G3E GTPase family. UreG subfamily. In terms of assembly, homodimer. UreH, UreF and UreG form a complex that acts as a GTP-hydrolysis-dependent molecular chaperone, activating the urease apoprotein by helping to assemble the nickel containing metallocenter of UreC. The UreE protein probably delivers the nickel.

It is found in the cytoplasm. In terms of biological role, facilitates the functional incorporation of the urease nickel metallocenter. This process requires GTP hydrolysis, probably effectuated by UreG. The protein is Urease accessory protein UreG of Helicobacter pylori (strain P12).